A 321-amino-acid chain; its full sequence is Ribose-phosphate pyrophosphokinase (321 aa).

ATP is bound by residues 44-46 (DGE) and 103-104 (RQ). Residues H137 and D179 each coordinate Mg(2+). K202 is a catalytic residue. Residues R204, D228, and 232-236 (DTAGT) each bind D-ribose 5-phosphate.

It belongs to the ribose-phosphate pyrophosphokinase family. Class I subfamily. In terms of assembly, homohexamer. The cofactor is Mg(2+).

Its subcellular location is the cytoplasm. It carries out the reaction D-ribose 5-phosphate + ATP = 5-phospho-alpha-D-ribose 1-diphosphate + AMP + H(+). It functions in the pathway metabolic intermediate biosynthesis; 5-phospho-alpha-D-ribose 1-diphosphate biosynthesis; 5-phospho-alpha-D-ribose 1-diphosphate from D-ribose 5-phosphate (route I): step 1/1. Functionally, involved in the biosynthesis of the central metabolite phospho-alpha-D-ribosyl-1-pyrophosphate (PRPP) via the transfer of pyrophosphoryl group from ATP to 1-hydroxyl of ribose-5-phosphate (Rib-5-P). In Staphylococcus aureus (strain Mu50 / ATCC 700699), this protein is Ribose-phosphate pyrophosphokinase.